The primary structure comprises 316 residues: Olfactory receptor class A-like protein 1 (316 aa).

Topologically, residues 1 to 8 are extracellular; sequence MDLCVTIK. Residues 9 to 29 form a helical membrane-spanning segment; sequence GVSFLLQAGLGILANALVLLA. At 30–39 the chain is on the cytoplasmic side; it reads YAHIRLAEAR. A helical transmembrane segment spans residues 40–60; the sequence is LQPVDAILCHLALVDLLLLLT. Over 61-97 the chain is Extracellular; it reads RGVPQTMTVFGMRNLLDDTGCKVVIYTYRIARALSVC. Residues C81 and C169 are joined by a disulfide bond. Residues 98–118 traverse the membrane as a helical segment; the sequence is ITCMLSVFQAVTVAPAAGPLL. The Cytoplasmic portion of the chain corresponds to 119–132; the sequence is SGVKARLPQLLAPT. Residues 133–153 traverse the membrane as a helical segment; sequence FAALWFINMAVCIAAPFFSVA. Over 154 to 187 the chain is Extracellular; that stretch reads PRNGTVPPFTLNLGFCHVDFHDNLSYVLNGVAVS. 2 N-linked (GlcNAc...) asparagine glycosylation sites follow: N156 and N176. The chain crosses the membrane as a helical span at residues 188-208; that stretch reads VRDFAFVGAMLASSGFILLLL. Residues 209–233 are Cytoplasmic-facing; that stretch reads HRHRRQVRAVRRSQGSTMETRAART. A helical transmembrane segment spans residues 234–254; sequence VLMLVILYSVFFGIDNVIWIY. The Extracellular segment spans residues 255–264; that stretch reads MLTVAQVPPV. A helical transmembrane segment spans residues 265–285; it reads VADMRVFFSSCYASLSPFLII. Over 286–316 the chain is Cytoplasmic; that stretch reads SSNRKLKARMVCATSEQERQAEDGKNSSGKN.

Belongs to the G-protein coupled receptor 1 family. As to expression, highly expressed in the olfactory rosette where it localizes to a subset of olfactory sensory neurons, mainly in the apical region of the neuroepithelium. Not detected in other tissues tested.

Its subcellular location is the cell membrane. Probable pheromone receptor. Shows high specificity for 4-hydroxyphenylacetic acid. Activation of the receptor stimulates intracellular calcium release. In Danio rerio (Zebrafish), this protein is Olfactory receptor class A-like protein 1.